The chain runs to 150 residues: Monooxygenase nsrS (150 aa).

Belongs to the avfA family.

The protein operates within secondary metabolite biosynthesis. In terms of biological role, monooxygenase; part of the gene cluster that mediates the biosynthesis of the tetrahydroxanthone dimer neosartorin, which exhibits antibacterial activity. The two different monomeric units appear to be synthesized by the same set of enzymes, among which the Baeyer-Villiger monooxygenase nsrF is the key enzyme for the divergence of the biosynthetic routes. The pathway begins with the synthesis of atrochrysone thioester by the polyketide synthase nsrB. The atrochrysone carboxyl ACP thioesterase nsrC then breaks the thioester bond and releases the atrochrysone carboxylic acid from AacuL. Atrochrysone carboxylic acid is decarboxylated by the decarboxylase nsrE, and oxidized by the anthrone oxygenase nsrD to yield emodin. Emodin is then reduced to emodin hydroquinone by the oxidoreductase nsrR. A-ring reduction by the short chain dehydrogenase nsrJ, dehydration by the scytalone dehydratase-like protein nsrI and probable spontaneous re-oxidation, results in overall deoxygenation to chrysophanol. The Baeyer-Villiger monooxygenase nsrF accepts chrysophanol as a substrate to insert one oxygen atom at two different positions to yield the precursors of both monomric units. NsrF is promiscuous/flexible in interacting with the 2 (non methylated and methylated) aromatic rings of chrysophanol, thus diverging the biosynthetic pathway at this point. After the hydrolysis of the lactones, methylesterification by the methyltransferase nsrG yields respectively moniliphenone and 2,2',6'-trihydroxy-4-methyl-6-methoxya-cyldiphenylmethanone. The next steps are the hydroxylation by the FAD-dependent monooxygenase nsrK, followed by isomerization by the monooxygenase nsrQ. The short chain dehydrogenase/reductase nsrO then catalyzes the C-5 ketoreduction to give the xanthone skeleton of blennolide C and 5-acetylblennolide A. The acetyltransferase nsrL has a strict substrate specificity and uses only blennolide A but not blennolide C to yield 5-acetylblennolide A as the single-acetylated product. In the final step of the biosynthesis, the heterodimerization of the 2 xanthones, blennolide C and 5-acetylblennolide A, is catalyzed by the cytochrome P450 monooxygenase nsrP. NsrP can utilize at least three different xanthones as its substrates to perform the dimerization reaction. In Aspergillus novofumigatus (strain IBT 16806), this protein is Monooxygenase nsrS.